Here is a 75-residue protein sequence, read N- to C-terminus: Acylphosphatase-like protein MJ1405 (75 aa).

The 68-residue stretch at 8-75 (TYEIIIYGRI…TNFWRVRKCK (68 aa)) folds into the Acylphosphatase-like domain.

The polypeptide is Acylphosphatase-like protein MJ1405 (Methanocaldococcus jannaschii (strain ATCC 43067 / DSM 2661 / JAL-1 / JCM 10045 / NBRC 100440) (Methanococcus jannaschii)).